The sequence spans 564 residues: MSSYGRLDEHEQAKLEASRKTKKRIAIIAISSIVLVCIVVGAVVGTTARDNSKKPPTENNGEPISVSVKALCDVTLHKEKCFETLGSAPNASRSSPEELFKYAVKVTITELSKVLDGFSNGEHMDNATSAAMGACVELIGLAVDQLNETMTSSLKNFDDLRTWLSSVGTYQETCMDALVEANKPSLTTFGENHLKNSTEMTSNALAIITWLGKIADTVKFRRRRLLETGNAKVVVADLPMMEGRRLLESGDLKKKATIVVAKDGSGKYRTIGEALAEVEEKNEKPTIIYVKKGVYLENVRVEKTKWNVVMVGDGQSKTIVSAGLNFIDGTPTFETATFAVFGKGFMARDMGFINTAGPAKHQAVALMVSADLSVFYKCTMDAFQDTMYAHAQRQFYRDCVILGTVDFIFGNAAVVFQKCEILPRRPMKGQQNTITAQGRKDPNQNTGISIHNCTIKPLDNLTDIQTFLGRPWKDFSTTVIMKSFMDKFINPKGWLPWTGDTAPDTIFYAEYLNSGPGASTKNRVKWQGLKTSLTKKEANKFTVKPFIDGNNWLPATKVPFNSDF.

Residues 25-45 (IAIIAISSIVLVCIVVGAVVG) form a helical membrane-spanning segment. Residues 62-207 (EPISVSVKAL…TEMTSNALAI (146 aa)) are pectinesterase inhibitor 46. 4 N-linked (GlcNAc...) asparagine glycosylation sites follow: Asn-90, Asn-126, Asn-147, and Asn-196. Residues 257–550 (TIVVAKDGSG…FTVKPFIDGN (294 aa)) form a pectinesterase 46 region. Substrate-binding residues include Thr-332 and Gln-362. The active-site Proton donor; for pectinesterase activity is Asp-385. Residues Cys-399 and Cys-419 are joined by a disulfide bond. The active-site Nucleophile; for pectinesterase activity is Asp-406. Asn-452 and Asn-460 each carry an N-linked (GlcNAc...) asparagine glycan. Substrate is bound by residues Arg-470 and Trp-472.

The protein in the N-terminal section; belongs to the PMEI family. This sequence in the C-terminal section; belongs to the pectinesterase family.

The protein resides in the membrane. It catalyses the reaction [(1-&gt;4)-alpha-D-galacturonosyl methyl ester](n) + n H2O = [(1-&gt;4)-alpha-D-galacturonosyl](n) + n methanol + n H(+). It participates in glycan metabolism; pectin degradation; 2-dehydro-3-deoxy-D-gluconate from pectin: step 1/5. In terms of biological role, acts in the modification of cell walls via demethylesterification of cell wall pectin. This Arabidopsis thaliana (Mouse-ear cress) protein is Probable pectinesterase/pectinesterase inhibitor 46 (PME46).